Reading from the N-terminus, the 219-residue chain is Ribose-5-phosphate isomerase A (219 aa).

Substrate is bound by residues 28-31, 81-84, and 94-97; these read TGST, DGAD, and KGGG. Glutamate 103 functions as the Proton acceptor in the catalytic mechanism. Lysine 121 serves as a coordination point for substrate.

This sequence belongs to the ribose 5-phosphate isomerase family. In terms of assembly, homodimer.

It catalyses the reaction aldehydo-D-ribose 5-phosphate = D-ribulose 5-phosphate. It functions in the pathway carbohydrate degradation; pentose phosphate pathway; D-ribose 5-phosphate from D-ribulose 5-phosphate (non-oxidative stage): step 1/1. In terms of biological role, catalyzes the reversible conversion of ribose-5-phosphate to ribulose 5-phosphate. This Photorhabdus laumondii subsp. laumondii (strain DSM 15139 / CIP 105565 / TT01) (Photorhabdus luminescens subsp. laumondii) protein is Ribose-5-phosphate isomerase A.